The sequence spans 89 residues: Mitochondrial import inner membrane translocase subunit Tim9 (89 aa).

The residue at position 2 (A2) is an N-acetylalanine. Positions C28 to C52 match the Twin CX3C motif motif. Intrachain disulfides connect C28-C52 and C32-C48.

The protein belongs to the small Tim family. As to quaternary structure, heterohexamer; composed of 3 copies of TIMM9 and 3 copies of TIMM10/TIM10A, named soluble 70 kDa complex. The complex forms a 6-bladed alpha-propeller structure and associates with the TIMM22 component of the TIM22 complex. Interacts with multi-pass transmembrane proteins in transit. Also forms a complex composed of TIMM9, TIMM10/TIM10A and FXC1/TIM10B. Ubiquitous, with highest expression in heart, kidney, liver and skeletal muscle.

Its subcellular location is the mitochondrion inner membrane. Functionally, mitochondrial intermembrane chaperone that participates in the import and insertion of multi-pass transmembrane proteins into the mitochondrial inner membrane. May also be required for the transfer of beta-barrel precursors from the TOM complex to the sorting and assembly machinery (SAM complex) of the outer membrane. Acts as a chaperone-like protein that protects the hydrophobic precursors from aggregation and guide them through the mitochondrial intermembrane space. This is Mitochondrial import inner membrane translocase subunit Tim9 (TIMM9) from Homo sapiens (Human).